The chain runs to 170 residues: Xanthine-guanine phosphoribosyltransferase (170 aa).

Residues 41-42 (RG) and 98-106 (DDLTDTGKT) each bind 5-phospho-alpha-D-ribose 1-diphosphate. Aspartate 99 is a binding site for Mg(2+). Aspartate 102 is a binding site for guanine. Aspartate 102 contributes to the xanthine binding site. 102-106 (DTGKT) provides a ligand contact to GMP.

It belongs to the purine/pyrimidine phosphoribosyltransferase family. XGPT subfamily. In terms of assembly, homotetramer. The cofactor is Mg(2+).

Its subcellular location is the cell inner membrane. The catalysed reaction is GMP + diphosphate = guanine + 5-phospho-alpha-D-ribose 1-diphosphate. It catalyses the reaction XMP + diphosphate = xanthine + 5-phospho-alpha-D-ribose 1-diphosphate. It carries out the reaction IMP + diphosphate = hypoxanthine + 5-phospho-alpha-D-ribose 1-diphosphate. The protein operates within purine metabolism; GMP biosynthesis via salvage pathway; GMP from guanine: step 1/1. Its pathway is purine metabolism; XMP biosynthesis via salvage pathway; XMP from xanthine: step 1/1. In terms of biological role, purine salvage pathway enzyme that catalyzes the transfer of the ribosyl-5-phosphate group from 5-phospho-alpha-D-ribose 1-diphosphate (PRPP) to the N9 position of the 6-oxopurines guanine and xanthine to form the corresponding ribonucleotides GMP (guanosine 5'-monophosphate) and XMP (xanthosine 5'-monophosphate), with the release of PPi. To a lesser extent, also acts on hypoxanthine. The polypeptide is Xanthine-guanine phosphoribosyltransferase (Brucella abortus (strain 2308)).